Reading from the N-terminus, the 145-residue chain is Large ribosomal subunit protein uL15 (145 aa).

Basic residues-rich tracts occupy residues 1-13 (MVRE…RGGH) and 19-29 (KAGRGKGKKGG). The interval 1–33 (MVRERTKKLRGGHYGRGMKAGRGKGKKGGRGNA) is disordered.

The protein belongs to the universal ribosomal protein uL15 family. Part of the 50S ribosomal subunit.

Its function is as follows. Binds to the 23S rRNA. This is Large ribosomal subunit protein uL15 from Thermoplasma volcanium (strain ATCC 51530 / DSM 4299 / JCM 9571 / NBRC 15438 / GSS1).